Consider the following 466-residue polypeptide: Arginine biosynthesis bifunctional protein ArgJ, mitochondrial (466 aa).

The N-terminal 9 residues, 1–9 (MSSLVLKRF), are a transit peptide targeting the mitochondrion. Thr-183, Lys-209, Thr-232, Glu-320, Asn-461, and Ser-466 together coordinate substrate. The active-site Nucleophile is Thr-232.

The protein belongs to the ArgJ family. As to quaternary structure, heterodimer of an alpha and a beta chain. The alpha and beta chains are autoproteolytically processed from a single precursor protein within the mitochondrion.

It is found in the mitochondrion matrix. The catalysed reaction is N(2)-acetyl-L-ornithine + L-glutamate = N-acetyl-L-glutamate + L-ornithine. The enzyme catalyses L-glutamate + acetyl-CoA = N-acetyl-L-glutamate + CoA + H(+). The protein operates within amino-acid biosynthesis; L-arginine biosynthesis; L-ornithine and N-acetyl-L-glutamate from L-glutamate and N(2)-acetyl-L-ornithine (cyclic): step 1/1. Its pathway is amino-acid biosynthesis; L-arginine biosynthesis; N(2)-acetyl-L-ornithine from L-glutamate: step 1/4. In terms of biological role, catalyzes two activities which are involved in the cyclic version of arginine biosynthesis: the synthesis of acetylglutamate from glutamate and acetyl-CoA, and of ornithine by transacetylation between acetylornithine and glutamate. The sequence is that of Arginine biosynthesis bifunctional protein ArgJ, mitochondrial from Laccaria bicolor (strain S238N-H82 / ATCC MYA-4686) (Bicoloured deceiver).